A 167-amino-acid chain; its full sequence is Transcription antitermination protein NusB (167 aa).

Residues methionine 1–asparagine 21 are disordered.

Belongs to the NusB family.

In terms of biological role, involved in transcription antitermination. Required for transcription of ribosomal RNA (rRNA) genes. Binds specifically to the boxA antiterminator sequence of the ribosomal RNA (rrn) operons. This chain is Transcription antitermination protein NusB, found in Nitrosomonas eutropha (strain DSM 101675 / C91 / Nm57).